The primary structure comprises 129 residues: Protein Turandot B2 (129 aa).

Positions 1–21 (MNSATSLMCFALLLISPLCMG) are cleaved as a signal peptide.

Belongs to the Turandot family.

Its subcellular location is the secreted. In terms of biological role, a humoral factor that may play a role in stress tolerance. In Drosophila erecta (Fruit fly), this protein is Protein Turandot B2 (TotB2).